A 204-amino-acid chain; its full sequence is 3-isopropylmalate dehydratase small subunit (204 aa).

It belongs to the LeuD family. LeuD type 1 subfamily. In terms of assembly, heterodimer of LeuC and LeuD.

It catalyses the reaction (2R,3S)-3-isopropylmalate = (2S)-2-isopropylmalate. It functions in the pathway amino-acid biosynthesis; L-leucine biosynthesis; L-leucine from 3-methyl-2-oxobutanoate: step 2/4. Its function is as follows. Catalyzes the isomerization between 2-isopropylmalate and 3-isopropylmalate, via the formation of 2-isopropylmaleate. In Ruthia magnifica subsp. Calyptogena magnifica, this protein is 3-isopropylmalate dehydratase small subunit.